The following is a 1184-amino-acid chain: MSNNINFNKNPDSSVSISKMDVIIPFTPDVPCDNNGQRMWWAFLASSMVTFFGGLFIILLWRTLKYLWTVCCHCNIKNKEAQKVNNPITIQADGTTKTGNEKEEAPASEVGWMTSVKDWAGVMISAQTLTGRVLVVLVFALSIGALGIYFIDSSDPIESCQNFYKDFTLQIDMAFNVFFLLYFGLRFIAANDKLWFWLEVNSVVDFFTVPPVFVSVYLNRSWLGLRFLRALRLIQFSEILQFLNILKTSNSIKLVNLCSIFISTWLTAAGFIHLVENSGDPWENFQNSQPLSYWECVYLLMVTMSTVGYGDVYARTTLGRLFMVFFILGGLAMFASYVPEIIELIGNRKKYGGSYSAVNGRKHIVVCGHITLESVSNFLKDFLHKDRDDVNVEIVFLHNISPNLELEALFKRHFTQVEFYQGSVLNPHDLARVKIESADACLILANKYCADPDAEDASNIMRVISIKNYHPKIRIITQMLQYHNKAHLLNIPSWNWKEGDDAICLAELKAGFIAQSCLAQGLSTMLANLFSMRSYIKIEEDTWQKYYLEGVANEMYTEYLSSAFVGLSFPTVCELCYVKLKLLLIAIEYKSEQRESSILINPGNHVKMQEGTLGFFIASDAKEVKRAFFYCKACHDDITDPKRIKKCGCKRIEDEHPSTLSPKKKQRNGGMRNSPNCSPKMMRHDPLLIPGNEQIESMDANVKRYDSTGMFHWCPSKEIEKVILTRSEASMTVLSGHVVVCIFGDVTSALVGLRNLVMPLRASNFHYHELKPIVFVGSLDYLRREWETLHNFPKVFILPGTPLSRADLRAVNINLCDMCVILSANQNNIDDASLQDKECILASLNIKSMQFDDSIGVLQANSQGFTPPGMDRSSPDNSPVHGLVRQASVTTGSNIPIITELVNDSNVQFLDQDDDDDPDTELYLTQPFACGTAFAVSVLDSLMSATYFNDNILTLIRTLVTGGATPELEALLAEENALRGGYSTPQTLANRDRCRVAQLALYDGPFADLGDGGCYGDLFCKALKTYNMLCFGIYRLRDAHLGAPSQCTKRYVITNPPYEFEMVPTDLIFCLMQFDHNAGQSRASLSHSSHSSHSSSKKSSSVHSIPATNRQNRSSKAREARDKQNATRMNRMGPEKRWFTDEAENAYPRNIQIKPMSTHMANQVNQYKSTSSLIPPIREVEDEC.

Topologically, residues 1 to 39 are extracellular; the sequence is MSNNINFNKNPDSSVSISKMDVIIPFTPDVPCDNNGQRM. The chain crosses the membrane as a helical span at residues 40-60; the sequence is WWAFLASSMVTFFGGLFIILL. At 61–132 the chain is on the cytoplasmic side; the sequence is WRTLKYLWTV…MISAQTLTGR (72 aa). 3 S-palmitoyl cysteine lipidation sites follow: Cys-71, Cys-72, and Cys-74. The helical transmembrane segment at 133 to 153 threads the bilayer; it reads VLVVLVFALSIGALGIYFIDS. Residues 154-168 are Extracellular-facing; the sequence is SDPIESCQNFYKDFT. A helical transmembrane segment spans residues 169-189; that stretch reads LQIDMAFNVFFLLYFGLRFIA. Residues 190–193 lie on the Cytoplasmic side of the membrane; it reads ANDK. The helical transmembrane segment at 194-214 threads the bilayer; that stretch reads LWFWLEVNSVVDFFTVPPVFV. Residues 215–254 are Extracellular-facing; the sequence is SVYLNRSWLGLRFLRALRLIQFSEILQFLNILKTSNSIKL. Residues 255 to 275 traverse the membrane as a helical segment; the sequence is VNLCSIFISTWLTAAGFIHLV. The Cytoplasmic portion of the chain corresponds to 276-289; sequence ENSGDPWENFQNSQ. A helical transmembrane segment spans residues 290 to 310; sequence PLSYWECVYLLMVTMSTVGYG. Residues 311–321 are Extracellular-facing; sequence DVYARTTLGRL. The helical transmembrane segment at 322–342 threads the bilayer; the sequence is FMVFFILGGLAMFASYVPEII. The Cytoplasmic segment spans residues 343 to 1184; that stretch reads ELIGNRKKYG…PPIREVEDEC (842 aa). Residues 361–503 enclose the RCK N-terminal 1 domain; it reads RKHIVVCGHI…WNWKEGDDAI (143 aa). The Mg(2+) site is built by Glu-393, Gln-416, and Glu-418. Asn-468 serves as a coordination point for Ca(2+). The interval 655-677 is disordered; the sequence is EHPSTLSPKKKQRNGGMRNSPNC. At Thr-659 the chain carries Phosphothreonine. 3 positions are modified to phosphoserine: Ser-661, Ser-674, and Ser-678. Residues 735 to 879 form the RCK N-terminal 2 domain; it reads SGHVVVCIFG…MDRSSPDNSP (145 aa). Residue Thr-866 is modified to Phosphothreonine. Residues Ser-874 and Ser-878 each carry the phosphoserine modification. Ca(2+)-binding residues include Gln-908, Asp-911, Asp-914, and Asp-916. The Calcium bowl signature appears at 908-916; the sequence is QFLDQDDDD. A disordered region spans residues 1082 to 1143; that stretch reads RASLSHSSHS…PEKRWFTDEA (62 aa). Over residues 1084–1104 the composition is skewed to low complexity; sequence SLSHSSHSSHSSSKKSSSVHS. The span at 1116 to 1125 shows a compositional bias: basic and acidic residues; sequence KAREARDKQN.

Belongs to the potassium channel family. Calcium-activated (TC 1.A.1.3) subfamily. KCa1.1/KCNMA1 sub-subfamily. As to quaternary structure, homotetramer; which constitutes the calcium-activated potassium channel. Post-translationally, phosphorylated. In terms of processing, palmitoylated.

The protein localises to the cell membrane. It catalyses the reaction K(+)(in) = K(+)(out). In terms of biological role, potassium channel activated by both membrane depolarization or increase in cytosolic Ca(2+) that mediates export of K(+). It is also activated by the concentration of cytosolic Mg(2+). Its activation dampens the excitatory events that elevate the cytosolic Ca(2+) concentration and/or depolarize the cell membrane. It therefore contributes to repolarization of the membrane potential. Involved in determining peripheral auditory sensitivity. The polypeptide is Calcium-activated potassium channel subunit alpha-1a (Danio rerio (Zebrafish)).